The primary structure comprises 331 residues: DSC E3 ubiquitin ligase complex subunit D (331 aa).

Asn-26 carries an N-linked (GlcNAc...) asparagine glycan. Transmembrane regions (helical) follow at residues 63–83 (ILIY…ILFA), 107–127 (PFIG…NFFT), and 159–179 (LFLL…LIVE). A compositionally biased stretch (basic and acidic residues) spans 197-214 (VQDHDSEERGVHRTRPES). The tract at residues 197-225 (VQDHDSEERGVHRTRPESRSSVVGAELDE) is disordered.

In terms of assembly, component of the DSC E3 ubiquitin ligase complex composed of dscA, dscB, dscC and dscD.

Its subcellular location is the endoplasmic reticulum membrane. It participates in protein modification; protein ubiquitination. Component of the DSC E3 ubiquitin ligase complex which is required for the srbA transcriptional activator proteolytic cleavage to release the soluble transcription factor from the membrane in low oxygen or sterol conditions. Required for growth during hypoxia and triazole drug susceptibility, as well as for virulence in a murine model of invasive pulmonary aspergillosis (IPA). This is DSC E3 ubiquitin ligase complex subunit D from Aspergillus fumigatus (strain CBS 144.89 / FGSC A1163 / CEA10) (Neosartorya fumigata).